The following is a 396-amino-acid chain: Tryptophan synthase beta chain (396 aa).

Lys86 carries the N6-(pyridoxal phosphate)lysine modification.

The protein belongs to the TrpB family. As to quaternary structure, tetramer of two alpha and two beta chains. The cofactor is pyridoxal 5'-phosphate.

It catalyses the reaction (1S,2R)-1-C-(indol-3-yl)glycerol 3-phosphate + L-serine = D-glyceraldehyde 3-phosphate + L-tryptophan + H2O. It functions in the pathway amino-acid biosynthesis; L-tryptophan biosynthesis; L-tryptophan from chorismate: step 5/5. Functionally, the beta subunit is responsible for the synthesis of L-tryptophan from indole and L-serine. This chain is Tryptophan synthase beta chain, found in Erwinia tasmaniensis (strain DSM 17950 / CFBP 7177 / CIP 109463 / NCPPB 4357 / Et1/99).